Reading from the N-terminus, the 2602-residue chain is Filamin-B (2602 aa).

An actin-binding region spans residues 1-239; it reads MPVTEKDLAE…VMTYLSQFPK (239 aa). Calponin-homology (CH) domains are found at residues 16-122 and 139-242; these read KIQQ…LHYS and QTPK…KAKL. Residue threonine 216 is modified to Phosphothreonine. The interval 244–267 is disordered; the sequence is PGAPLKPKLNPKKARAYGRGIEPT. Filamin repeat units follow at residues 249 to 347, 349 to 446, 447 to 543, 544 to 636, 640 to 736, 737 to 839, 840 to 938, 939 to 1034, 1035 to 1127, 1128 to 1222, 1223 to 1322, 1323 to 1415, 1416 to 1511, 1512 to 1608, and 1609 to 1704; these read KPKL…EVNV, KAQG…GVQI, GEAC…EVQV, GPEA…MAFI, TGDY…RVNI, GQGS…RVKV, DPSH…TVGV, AAPL…TVEA, SLPP…KADI, EMPF…WVKV, EPAI…KVAV, TEGC…RVPS, KDVV…KVKV, LPTY…RIRA, and TQTG…TVMA. At threonine 519 the chain carries Phosphothreonine. Lysine 681 carries the post-translational modification N6-acetyllysine. The residue at position 730 (serine 730) is a Phosphoserine. Over residues 837–850 the composition is skewed to basic and acidic residues; that stretch reads VKVDPSHDASKVKA. Positions 837–862 are disordered; the sequence is VKVDPSHDASKVKAEGPGLSKAGVEN. 4 positions are modified to phosphoserine: serine 886, serine 932, serine 983, and serine 1028. Threonine 1307 is modified (phosphothreonine). Serine 1316 is modified (phosphoserine). Residues serine 1433, serine 1505, and serine 1602 each carry the phosphoserine modification. The hinge 1 stretch occupies residues 1705–1728; that stretch reads TDGEVTAMEEAPVNACPPGFRPWV. Filamin repeat units lie at residues 1729 to 1813, 1816 to 1908, 1919 to 1994, 1997 to 2089, 2091 to 2185, 2188 to 2280, 2282 to 2375, and 2379 to 2471; these read TEEA…SPLQ, VNYP…TAKI, KLGS…SIMV, SEIG…TVKI, GEGR…QFTV, LGEG…LVPV, APSD…KVRV, and GQAG…KAKV. At lysine 1780 the chain carries N6-acetyllysine. Phosphoserine is present on residues serine 2083 and serine 2113. A phosphoserine mark is found at serine 2369 and serine 2465. Lysine 2468 is covalently cross-linked (Glycyl lysine isopeptide (Lys-Gly) (interchain with G-Cter in ISG15)). Residues 2472-2506 form a hinge 2 region; that stretch reads TGQRLVSPGSANETSSILVESVTRSSTETCYSAIP. Positions 2472 to 2602 are self-association site, tail; the sequence is TGQRLVSPGS…PGSPFHVTVP (131 aa). Phosphoserine occurs at positions 2478, 2481, and 2492. The stretch at 2507–2601 is one Filamin 24 repeat; it reads KSSSDASKVT…IPGSPFHVTV (95 aa). N6-succinyllysine occurs at positions 2518 and 2524. Lysine 2576 carries the N6-acetyllysine modification.

Belongs to the filamin family. As to quaternary structure, homodimer. Interacts with FLNA, FLNC, INPPL1, ITGB1A, ITGB1D, ITGB3, ITGB6, MYOT, MYOZ1, PSEN1 and PSEN2. Interacts with MICALL2. Interacts with RFLNA and RFLNB. Interacts with ASB2 isoform 1; the interaction targets FLNB for proteasomal degradation. In terms of processing, ISGylation prevents ability to interact with the upstream activators of the JNK cascade and inhibits IFNA-induced JNK signaling. Ubiquitination by a SCF-like complex containing ASB2 isoform 1 leads to proteasomal degradation which promotes muscle differentiation. In terms of tissue distribution, expressed in hippocampus, cortex, cerebellar Purkinje cells and granule cell layers.

The protein resides in the cytoplasm. It localises to the cell cortex. Its subcellular location is the cytoskeleton. The protein localises to the stress fiber. It is found in the myofibril. The protein resides in the sarcomere. It localises to the z line. Functionally, connects cell membrane constituents to the actin cytoskeleton. May promote orthogonal branching of actin filaments and links actin filaments to membrane glycoproteins. Anchors various transmembrane proteins to the actin cytoskeleton. This is Filamin-B (Flnb) from Mus musculus (Mouse).